The primary structure comprises 344 residues: Fructose-1,6-bisphosphatase class 1 (344 aa).

E90, D109, L111, and D112 together coordinate Mg(2+). Substrate-binding positions include 112 to 115 (DGSS) and N200. E271 contributes to the Mg(2+) binding site.

This sequence belongs to the FBPase class 1 family. As to quaternary structure, homotetramer. Mg(2+) serves as cofactor.

It localises to the cytoplasm. The catalysed reaction is beta-D-fructose 1,6-bisphosphate + H2O = beta-D-fructose 6-phosphate + phosphate. Its pathway is carbohydrate biosynthesis; gluconeogenesis. This Nitrobacter vulgaris protein is Fructose-1,6-bisphosphatase class 1.